A 105-amino-acid chain; its full sequence is U-scoloptoxin(10)-Sm3a (105 aa).

The first 23 residues, 1–23 (MYKFIFIFFTVFFLINIIEESXT), serve as a signal peptide directing secretion.

The protein belongs to the scoloptoxin-10 family. In terms of processing, contains 3 disulfide bonds. As to expression, expressed by the venom gland.

The protein resides in the secreted. This is U-scoloptoxin(10)-Sm3a from Scolopendra morsitans (Tanzanian blue ringleg centipede).